We begin with the raw amino-acid sequence, 530 residues long: Ubiquitin carboxyl-terminal hydrolase 17-like protein 24 (530 aa).

The region spanning A80–K375 is the USP domain. The active-site Nucleophile is the C89. The active-site Proton acceptor is H334. Basic and acidic residues-rich tracts occupy residues S382–R392 and D398–H412. Disordered regions lie at residues S382–H412 and N477–Q530. Residues T493–L505 show a composition bias toward polar residues. A compositionally biased stretch (basic residues) spans G510–R524.

This sequence belongs to the peptidase C19 family. USP17 subfamily. In terms of tissue distribution, expressed in heart, brain, liver and skeletal muscle.

It localises to the nucleus. Its subcellular location is the nucleolus. The protein resides in the endoplasmic reticulum. It carries out the reaction Thiol-dependent hydrolysis of ester, thioester, amide, peptide and isopeptide bonds formed by the C-terminal Gly of ubiquitin (a 76-residue protein attached to proteins as an intracellular targeting signal).. In terms of biological role, deubiquitinating enzyme that removes conjugated ubiquitin from specific proteins to regulate different cellular processes that may include cell proliferation, progression through the cell cycle, apoptosis, cell migration, and the cellular response to viral infection. This Homo sapiens (Human) protein is Ubiquitin carboxyl-terminal hydrolase 17-like protein 24 (USP17L24).